The following is a 148-amino-acid chain: UPF0591 membrane protein C15E1.02c (148 aa).

3 helical membrane passes run 14–34 (AILLGIAFDHAASFLVYGPLM), 80–102 (LLQLTGTVTLKGAFFVGLYVFGA), and 122–142 (ILVKTISSLVKSVGLSVALIG).

This sequence belongs to the UPF0591 family.

The protein localises to the membrane. In Schizosaccharomyces pombe (strain 972 / ATCC 24843) (Fission yeast), this protein is UPF0591 membrane protein C15E1.02c.